Here is a 116-residue protein sequence, read N- to C-terminus: G antigen 2D (116 aa).

A disordered region spans residues 1–116 (MSWRGRSTYR…PEEGEKQSQC (116 aa)). 2 stretches are compositionally biased toward acidic residues: residues 31–44 (FSDEVEPATPEEGE) and 86–95 (ECEDGPDGQE). The segment covering 102-116 (EEVKTPEEGEKQSQC) has biased composition (basic and acidic residues).

The protein belongs to the GAGE family. As to expression, not expressed in normal tissues, except in testis, but expressed by a large proportion of tumors of various histological origins.

This is G antigen 2D (GAGE2D) from Homo sapiens (Human).